Consider the following 365-residue polypeptide: tRNA/tmRNA (uracil-C(5))-methyltransferase (365 aa).

The S-adenosyl-L-methionine site is built by glutamine 189, tyrosine 217, asparagine 222, glutamate 238, and aspartate 298. Cysteine 323 functions as the Nucleophile in the catalytic mechanism. The active-site Proton acceptor is the glutamate 357.

It belongs to the class I-like SAM-binding methyltransferase superfamily. RNA M5U methyltransferase family. TrmA subfamily.

The catalysed reaction is uridine(54) in tRNA + S-adenosyl-L-methionine = 5-methyluridine(54) in tRNA + S-adenosyl-L-homocysteine + H(+). The enzyme catalyses uridine(341) in tmRNA + S-adenosyl-L-methionine = 5-methyluridine(341) in tmRNA + S-adenosyl-L-homocysteine + H(+). Dual-specificity methyltransferase that catalyzes the formation of 5-methyluridine at position 54 (m5U54) in all tRNAs, and that of position 341 (m5U341) in tmRNA (transfer-mRNA). The chain is tRNA/tmRNA (uracil-C(5))-methyltransferase from Shewanella amazonensis (strain ATCC BAA-1098 / SB2B).